Here is a 192-residue protein sequence, read N- to C-terminus: MEYRSLTLDYFLSRFQLLRPQINRETLNHRQAAVLIPIVRRPQPGLLLTQRSIHLRKHAGQVAFPGGAVDDTDASVIAAALREAEEEVAIPPSAVEVIGVLPPVDSVTGYQVTPVVGIIPPDLPYRASEDEVSAVFEMPLAQALHLGRYHPLDIYRRGDSHRVWLSWYEQYFVWGMTAGIIRELALQIGVKP.

The Nudix hydrolase domain maps to 29-160 (HRQAAVLIPI…PLDIYRRGDS (132 aa)). Positions 67 to 89 (GAVDDTDASVIAAALREAEEEVA) match the Nudix box motif. Mg(2+)-binding residues include glutamate 83 and glutamate 87.

This sequence belongs to the Nudix hydrolase family. PCD1 subfamily. Mn(2+) is required as a cofactor. Mg(2+) serves as cofactor.

Probably mediates the hydrolysis of some nucleoside diphosphate derivatives. This is an uncharacterized protein from Escherichia coli O139:H28 (strain E24377A / ETEC).